The primary structure comprises 253 residues: Trypsin delta (253 aa).

An N-terminal signal peptide occupies residues 1–22; sequence MLKFVILLSAVACALGGTIPEG. Positions 23–30 are cleaved as a propeptide — activation peptide; it reads LLPQLDGR. In terms of domain architecture, Peptidase S1 spans 31 to 253; that stretch reads IVGGTATTIS…DLRAWVVRNA (223 aa). Cysteines 56 and 72 form a disulfide. Catalysis depends on charge relay system residues His71 and Asp116. Intrachain disulfides connect Cys180–Cys197 and Cys206–Cys230. Residue Ser210 is the Charge relay system of the active site.

Belongs to the peptidase S1 family.

It is found in the secreted. It localises to the extracellular space. The enzyme catalyses Preferential cleavage: Arg-|-Xaa, Lys-|-Xaa.. This is Trypsin delta from Drosophila erecta (Fruit fly).